The sequence spans 419 residues: L-rhamnose isomerase (419 aa).

3 residues coordinate Mn(2+): histidine 262, aspartate 294, and aspartate 296.

Belongs to the rhamnose isomerase family. In terms of assembly, homotetramer. It depends on Mn(2+) as a cofactor.

It localises to the cytoplasm. The enzyme catalyses L-rhamnopyranose = L-rhamnulose. It participates in carbohydrate degradation; L-rhamnose degradation; glycerone phosphate from L-rhamnose: step 1/3. Its function is as follows. Catalyzes the interconversion of L-rhamnose and L-rhamnulose. This chain is L-rhamnose isomerase, found in Escherichia fergusonii (strain ATCC 35469 / DSM 13698 / CCUG 18766 / IAM 14443 / JCM 21226 / LMG 7866 / NBRC 102419 / NCTC 12128 / CDC 0568-73).